A 132-amino-acid polypeptide reads, in one-letter code: Small ribosomal subunit protein uS11 (132 aa).

Belongs to the universal ribosomal protein uS11 family. Part of the 30S ribosomal subunit.

Its function is as follows. Located on the platform of the 30S subunit. This is Small ribosomal subunit protein uS11 (rps11) from Korarchaeum cryptofilum (strain OPF8).